Consider the following 195-residue polypeptide: Heavy metal-associated isoprenylated plant protein 18 (195 aa).

2 disordered regions span residues 36 to 76 (DVVQ…KPET) and 145 to 172 (EKEKKDDEPITKDEENEIDRGVYMNPSS). 2 stretches are compositionally biased toward basic and acidic residues: residues 47-76 (TVTKKNEEGDIVDKKDETPEVEEKIDKPET) and 145-157 (EKEKKDDEPITKD). The 72-residue stretch at 78 to 149 (TRKLEIHIAF…RIVKMEKEKK (72 aa)) folds into the HMA domain. Cys192 is subject to Cysteine methyl ester. Cys192 carries S-farnesyl cysteine lipidation. The propeptide at 193 to 195 (SIS) is removed in mature form.

This sequence belongs to the HIPP family.

In terms of biological role, probable heavy-metal-binding protein. Required for female gametophyte development and function. This Arabidopsis thaliana (Mouse-ear cress) protein is Heavy metal-associated isoprenylated plant protein 18.